The primary structure comprises 184 residues: Ribosome-recycling factor (184 aa).

The protein belongs to the RRF family.

Its subcellular location is the cytoplasm. In terms of biological role, responsible for the release of ribosomes from messenger RNA at the termination of protein biosynthesis. May increase the efficiency of translation by recycling ribosomes from one round of translation to another. The polypeptide is Ribosome-recycling factor (Bifidobacterium animalis subsp. lactis (strain AD011)).